Here is a 359-residue protein sequence, read N- to C-terminus: Histidinol-phosphate aminotransferase (359 aa).

Lys217 is modified (N6-(pyridoxal phosphate)lysine).

The protein belongs to the class-II pyridoxal-phosphate-dependent aminotransferase family. Histidinol-phosphate aminotransferase subfamily. In terms of assembly, homodimer. The cofactor is pyridoxal 5'-phosphate.

The catalysed reaction is L-histidinol phosphate + 2-oxoglutarate = 3-(imidazol-4-yl)-2-oxopropyl phosphate + L-glutamate. Its pathway is amino-acid biosynthesis; L-histidine biosynthesis; L-histidine from 5-phospho-alpha-D-ribose 1-diphosphate: step 7/9. The protein is Histidinol-phosphate aminotransferase of Salmonella heidelberg (strain SL476).